A 193-amino-acid polypeptide reads, in one-letter code: Holliday junction branch migration complex subunit RuvA (193 aa).

Residues 1-64 (MIGRIAGTLL…EDAHLLYGFL (64 aa)) are domain I. The segment at 65–139 (TPPERSTFRE…GKLGADLGPL (75 aa)) is domain II. A flexible linker region spans residues 139–143 (LAGAA). The tract at residues 144-193 (SPSDHATDILNALVALGYSEKEALAAIKNVPAGTGVSEGIKLSLKALSKA) is domain III.

It belongs to the RuvA family. Homotetramer. Forms an RuvA(8)-RuvB(12)-Holliday junction (HJ) complex. HJ DNA is sandwiched between 2 RuvA tetramers; dsDNA enters through RuvA and exits via RuvB. An RuvB hexamer assembles on each DNA strand where it exits the tetramer. Each RuvB hexamer is contacted by two RuvA subunits (via domain III) on 2 adjacent RuvB subunits; this complex drives branch migration. In the full resolvosome a probable DNA-RuvA(4)-RuvB(12)-RuvC(2) complex forms which resolves the HJ.

It localises to the cytoplasm. The RuvA-RuvB-RuvC complex processes Holliday junction (HJ) DNA during genetic recombination and DNA repair, while the RuvA-RuvB complex plays an important role in the rescue of blocked DNA replication forks via replication fork reversal (RFR). RuvA specifically binds to HJ cruciform DNA, conferring on it an open structure. The RuvB hexamer acts as an ATP-dependent pump, pulling dsDNA into and through the RuvAB complex. HJ branch migration allows RuvC to scan DNA until it finds its consensus sequence, where it cleaves and resolves the cruciform DNA. The polypeptide is Holliday junction branch migration complex subunit RuvA (Burkholderia mallei (strain NCTC 10229)).